The sequence spans 483 residues: Glutamyl-tRNA(Gln) amidotransferase subunit A (483 aa).

Residues Lys-76 and Ser-151 each act as charge relay system in the active site. Ser-175 acts as the Acyl-ester intermediate in catalysis.

Belongs to the amidase family. GatA subfamily. As to quaternary structure, heterotrimer of A, B and C subunits.

The enzyme catalyses L-glutamyl-tRNA(Gln) + L-glutamine + ATP + H2O = L-glutaminyl-tRNA(Gln) + L-glutamate + ADP + phosphate + H(+). In terms of biological role, allows the formation of correctly charged Gln-tRNA(Gln) through the transamidation of misacylated Glu-tRNA(Gln) in organisms which lack glutaminyl-tRNA synthetase. The reaction takes place in the presence of glutamine and ATP through an activated gamma-phospho-Glu-tRNA(Gln). This is Glutamyl-tRNA(Gln) amidotransferase subunit A from Pseudomonas fluorescens (strain SBW25).